The chain runs to 178 residues: MSSEEDDAISLISVLGLAVFIGLCILLVVLIATSALILVIYVIIDCILRPFLGTCLDLDLEIGVQRGQQRARIVTYHTIISTGLRLPDFEREGKKRGLKQSVIETLLPKLLVGQGNHEEDEEKSLESRECAICLSGYVVNEECRVFPVCRHIYHALCIDAWLKNHLTCPTCRKDLPES.

Residues 11–31 (LISVLGLAVFIGLCILLVVLI) traverse the membrane as a helical segment. An RING-type; atypical zinc finger spans residues 130–172 (CAICLSGYVVNEECRVFPVCRHIYHALCIDAWLKNHLTCPTCR).

Belongs to the RING-type zinc finger family. ATL subfamily.

It is found in the membrane. It carries out the reaction S-ubiquitinyl-[E2 ubiquitin-conjugating enzyme]-L-cysteine + [acceptor protein]-L-lysine = [E2 ubiquitin-conjugating enzyme]-L-cysteine + N(6)-ubiquitinyl-[acceptor protein]-L-lysine.. It functions in the pathway protein modification; protein ubiquitination. The protein is Putative RING-H2 finger protein ATL19 (ATL19) of Arabidopsis thaliana (Mouse-ear cress).